The primary structure comprises 417 residues: Serine hydroxymethyltransferase (417 aa).

Residues L121 and 125–127 (GHL) each bind (6S)-5,6,7,8-tetrahydrofolate. K229 is modified (N6-(pyridoxal phosphate)lysine). Position 355-357 (355-357 (SPF)) interacts with (6S)-5,6,7,8-tetrahydrofolate.

This sequence belongs to the SHMT family. Homodimer. It depends on pyridoxal 5'-phosphate as a cofactor.

The protein resides in the cytoplasm. The enzyme catalyses (6R)-5,10-methylene-5,6,7,8-tetrahydrofolate + glycine + H2O = (6S)-5,6,7,8-tetrahydrofolate + L-serine. It participates in one-carbon metabolism; tetrahydrofolate interconversion. It functions in the pathway amino-acid biosynthesis; glycine biosynthesis; glycine from L-serine: step 1/1. Its function is as follows. Catalyzes the reversible interconversion of serine and glycine with tetrahydrofolate (THF) serving as the one-carbon carrier. This reaction serves as the major source of one-carbon groups required for the biosynthesis of purines, thymidylate, methionine, and other important biomolecules. Also exhibits THF-independent aldolase activity toward beta-hydroxyamino acids, producing glycine and aldehydes, via a retro-aldol mechanism. The sequence is that of Serine hydroxymethyltransferase from Proteus mirabilis (strain HI4320).